The chain runs to 133 residues: Small ribosomal subunit protein uS8 (133 aa).

It belongs to the universal ribosomal protein uS8 family. As to quaternary structure, part of the 30S ribosomal subunit. Contacts proteins S5 and S12.

Its function is as follows. One of the primary rRNA binding proteins, it binds directly to 16S rRNA central domain where it helps coordinate assembly of the platform of the 30S subunit. In Parasynechococcus marenigrum (strain WH8102), this protein is Small ribosomal subunit protein uS8.